The chain runs to 476 residues: MSIQTSDPNDPNGSLKSLSLIAAHSHITGLGLDDNLQPRASSEGMVGQLQARRAAGVILRMIQNGSIAGRAILVAGPPSTGKTALAMGLSQSLGKDVPFTAITGSEIFSLELSKTEALTQAFRKSIGIKIKEETELIEGEVVEIQIDRSITGGHKQGKLTIKTTDMETIYELGNKMIDGLTKEKVLAGDVISIDKASGKITKLGRSFARSRDYDAMGYDTKFVQCPEGELQKRKTVVHTVSLHEIDVINSRTQGFLALFTGDTGEIRSEVRDQINTKVAEWKEEGKAEIVPGVLFIDEVHMLDIECFSFINRALEDEFAPIIMMATNRGISKTRGTNYKSPHGLPLDLLDRSIIITTSNYNEEEIKTILTIRAQEEEVELSPDALDLLTKTGGETSLRYSSNLISVAQQIALKRKSNTVEVADVKKAYLLFLDSSRSVKFVQENQDQYIDDNGKVIISTSGEMTQPADGEAMDTTE.

ATP is bound at residue 76-83 (GPPSTGKT).

The protein belongs to the RuvB family. As to quaternary structure, may form heterododecamers with RVB1. Component of the SWR1 chromatin remodeling complex, the INO80 chromatin remodeling complex, and of the R2TP complex.

It localises to the nucleus. It carries out the reaction ATP + H2O = ADP + phosphate + H(+). Functionally, DNA helicase which participates in several chromatin remodeling complexes, including the SWR1 and the INO80 complexes. The SWR1 complex mediates the ATP-dependent exchange of histone H2A for the H2A variant HZT1 leading to transcriptional regulation of selected genes by chromatin remodeling. The INO80 complex remodels chromatin by shifting nucleosomes and is involved in DNA repair. Also involved in pre-rRNA processing. This chain is RuvB-like helicase 2 (RVB2), found in Candida glabrata (strain ATCC 2001 / BCRC 20586 / JCM 3761 / NBRC 0622 / NRRL Y-65 / CBS 138) (Yeast).